A 302-amino-acid chain; its full sequence is Pathogenicity locus probable regulatory protein HrpS (302 aa).

The Sigma-54 factor interaction domain occupies aspartate 9 to leucine 237. ATP contacts are provided by residues glycine 37–aspartate 44 and alanine 99–glutamate 108. The H-T-H motif DNA-binding region spans isoleucine 279 to lysine 298.

Functionally, member of the two-component regulatory system HrpR/HrpS that regulates the activation of the sigma factor hrpL which itself induces the expression of hprD as well as other hrp loci which are involved in plant pathogenicity, hrmA and avr genes. Probably interacts with sigma-54. The chain is Pathogenicity locus probable regulatory protein HrpS (hrpS) from Pseudomonas savastanoi pv. phaseolicola (Pseudomonas syringae pv. phaseolicola).